A 156-amino-acid polypeptide reads, in one-letter code: Ribosome maturation factor RimP (156 aa).

The protein belongs to the RimP family.

Its subcellular location is the cytoplasm. Functionally, required for maturation of 30S ribosomal subunits. This Dictyoglomus turgidum (strain DSM 6724 / Z-1310) protein is Ribosome maturation factor RimP.